Reading from the N-terminus, the 298-residue chain is NAD-dependent L-serine dehydrogenase (298 aa).

Residues 2–31 (KQIA…NVFD), 65–66 (LP), proline 66, and threonine 96 contribute to the NAD(+) site. Lysine 171 is a catalytic residue. Lysine 246 provides a ligand contact to NAD(+).

This sequence belongs to the HIBADH-related family. In terms of assembly, homotetramer, dimer of dimers.

The catalysed reaction is L-serine + NAD(+) = aminoacetaldehyde + CO2 + NADH. It participates in amino-acid degradation. Functionally, NAD-dependent L-serine dehydrogenase that catalyzes the oxidation of L-serine and methyl-L-serine and is possibly involved in serine catabolism. Has low activity toward beta-hydroxyisobutyrate. This chain is NAD-dependent L-serine dehydrogenase, found in Pseudomonas aeruginosa (strain ATCC 15692 / DSM 22644 / CIP 104116 / JCM 14847 / LMG 12228 / 1C / PRS 101 / PAO1).